The primary structure comprises 1222 residues: ATP-dependent helicase/nuclease subunit A (1222 aa).

The UvrD-like helicase ATP-binding domain occupies 39–495; it reads QKRTAQQIEA…ILLKENFRSQ (457 aa). Position 60-67 (60-67) interacts with ATP; it reads ASAGSGKT. The UvrD-like helicase C-terminal domain maps to 524-810; sequence QLIAGSHAQT…NLMTIHKSKG (287 aa).

It belongs to the helicase family. AddA subfamily. In terms of assembly, heterodimer of AddA and AddB/RexB. Mg(2+) serves as cofactor.

It carries out the reaction Couples ATP hydrolysis with the unwinding of duplex DNA by translocating in the 3'-5' direction.. It catalyses the reaction ATP + H2O = ADP + phosphate + H(+). Functionally, the heterodimer acts as both an ATP-dependent DNA helicase and an ATP-dependent, dual-direction single-stranded exonuclease. Recognizes the chi site generating a DNA molecule suitable for the initiation of homologous recombination. The AddA nuclease domain is required for chi fragment generation; this subunit has the helicase and 3' -&gt; 5' nuclease activities. In Streptococcus pyogenes serotype M49 (strain NZ131), this protein is ATP-dependent helicase/nuclease subunit A.